Reading from the N-terminus, the 169-residue chain is Disulfide bond formation protein B (169 aa).

The Cytoplasmic segment spans residues 1 to 14 (MNNLTLSLHRERRL). A helical transmembrane segment spans residues 15–31 (LVLLGLVCLALLAGALY). The Periplasmic portion of the chain corresponds to 32–49 (LQYVKNEDPCPLCIIQRY). C41 and C44 form a disulfide bridge. A helical membrane pass occupies residues 50–64 (FFVLIAVFAFIGAGM). Residues 65-71 (ASGAGIA) lie on the Cytoplasmic side of the membrane. Residues 72 to 89 (VIEALIVLSAAAGVGTAA) form a helical membrane-spanning segment. Residues 90–144 (RHLYVQLNPGFSCGFDALQPVVDSLPPAHWLPGVFKVAGLCETVYPPIFGILLPG) lie on the Periplasmic side of the membrane. A disulfide bond links C102 and C130. The helical transmembrane segment at 145 to 163 (WALIAFALIVVPVAASLLR) threads the bilayer. The Cytoplasmic portion of the chain corresponds to 164-169 (HRGRLR).

Belongs to the DsbB family.

The protein resides in the cell inner membrane. Its function is as follows. Required for disulfide bond formation in some periplasmic proteins. Acts by oxidizing the DsbA protein. This chain is Disulfide bond formation protein B, found in Burkholderia thailandensis (strain ATCC 700388 / DSM 13276 / CCUG 48851 / CIP 106301 / E264).